The following is a 286-amino-acid chain: Beta-lactamase SHV-3 (286 aa).

The first 21 residues, 1–21 (MRYIRLCIISLLATLPLAVHA), serve as a signal peptide directing secretion. The active-site Acyl-ester intermediate is the S66. Cysteines 73 and 119 form a disulfide. The active-site Proton acceptor is the E164. 230–232 (KTG) is a binding site for substrate.

This sequence belongs to the class-A beta-lactamase family.

It catalyses the reaction a beta-lactam + H2O = a substituted beta-amino acid. In terms of biological role, this enzyme hydrolyzes cefotaxime, ceftazidime and other broad spectrum cephalosporins. The polypeptide is Beta-lactamase SHV-3 (bla) (Klebsiella pneumoniae).